The chain runs to 82 residues: Conotoxin Tx6.6 (82 aa).

Positions Met1–Leu19 are cleaved as a signal peptide. Positions Val20–Lys51 are excised as a propeptide. Intrachain disulfides connect Cys53-Cys71, Cys60-Cys76, and Cys70-Cys81. Ala82 carries the post-translational modification Alanine amide; partial.

This sequence belongs to the O1 superfamily. Expressed by the venom duct.

It is found in the secreted. Omega-conotoxins act at presynaptic membranes, they bind and block voltage-gated calcium channels (Cav). The chain is Conotoxin Tx6.6 from Conus textile (Cloth-of-gold cone).